The sequence spans 191 residues: Fe/S biogenesis protein NfuA (191 aa).

[4Fe-4S] cluster contacts are provided by Cys-149 and Cys-152.

The protein belongs to the NfuA family. As to quaternary structure, homodimer. [4Fe-4S] cluster is required as a cofactor.

Its function is as follows. Involved in iron-sulfur cluster biogenesis. Binds a 4Fe-4S cluster, can transfer this cluster to apoproteins, and thereby intervenes in the maturation of Fe/S proteins. Could also act as a scaffold/chaperone for damaged Fe/S proteins. The polypeptide is Fe/S biogenesis protein NfuA (Serratia proteamaculans (strain 568)).